The following is a 496-amino-acid chain: 1-aminocyclopropane-1-carboxylate synthase 4 (496 aa).

Residue lysine 300 is modified to N6-(pyridoxal phosphate)lysine.

It belongs to the class-I pyridoxal-phosphate-dependent aminotransferase family. Pyridoxal 5'-phosphate serves as cofactor. In terms of tissue distribution, expressed in leaves. Expressed in shoots and leaf blades. Expressed at low levels in leaf sheaths.

It carries out the reaction S-adenosyl-L-methionine = 1-aminocyclopropane-1-carboxylate + S-methyl-5'-thioadenosine + H(+). The protein operates within alkene biosynthesis; ethylene biosynthesis via S-adenosyl-L-methionine; ethylene from S-adenosyl-L-methionine: step 1/2. Catalyzes the formation of 1-aminocyclopropane-1-carboxylate, a direct precursor of ethylene in higher plants. In Oryza sativa subsp. japonica (Rice), this protein is 1-aminocyclopropane-1-carboxylate synthase 4.